Here is a 371-residue protein sequence, read N- to C-terminus: Cytochrome b (371 aa).

A run of 4 helical transmembrane segments spans residues 25–45 (FGSM…FLAV), 69–90 (WMMQ…YIHI), 105–125 (WMSG…GYVL), and 170–190 (FFAL…LHII). Histidine 75 and histidine 89 together coordinate heme b. Histidine 174 and histidine 188 together coordinate heme b. Histidine 193 provides a ligand contact to a ubiquinone. Transmembrane regions (helical) follow at residues 218-238 (YKDL…VSFF), 280-300 (LGGA…PFMH), 312-332 (LSQL…WAAT), and 339-358 (YIMI…LSIP).

This sequence belongs to the cytochrome b family. In terms of assembly, the cytochrome bc1 complex contains 3 respiratory subunits (MT-CYB, CYC1 and UQCRFS1), 2 core proteins (UQCRC1 and UQCRC2) and probably 6 low-molecular weight proteins. The cofactor is heme b.

It localises to the mitochondrion inner membrane. In terms of biological role, component of the ubiquinol-cytochrome c reductase complex (complex III or cytochrome b-c1 complex) that is part of the mitochondrial respiratory chain. The b-c1 complex mediates electron transfer from ubiquinol to cytochrome c. Contributes to the generation of a proton gradient across the mitochondrial membrane that is then used for ATP synthesis. The chain is Cytochrome b (MT-CYB) from Simalia amethistina (Amethystine python).